Here is a 406-residue protein sequence, read N- to C-terminus: NADH-ubiquinone oxidoreductase 49 kDa subunit (406 aa).

This sequence belongs to the complex I 49 kDa subunit family. In terms of assembly, complex I is composed of 45 different subunits. Component of the iron-sulfur (IP) fragment of the enzyme.

It localises to the mitochondrion inner membrane. The catalysed reaction is a ubiquinone + NADH + 5 H(+)(in) = a ubiquinol + NAD(+) + 4 H(+)(out). Core subunit of the mitochondrial membrane respiratory chain NADH dehydrogenase (Complex I) that is believed to belong to the minimal assembly required for catalysis. Complex I functions in the transfer of electrons from NADH to the respiratory chain. The immediate electron acceptor for the enzyme is believed to be ubiquinone. The sequence is that of NADH-ubiquinone oxidoreductase 49 kDa subunit (nad7) from Dictyostelium citrinum (Slime mold).